The following is a 566-amino-acid chain: Glucose starvation modulator protein 1 (566 aa).

The zn(2)-C6 fungal-type DNA-binding region spans 20–48 (CVFCHQKHLQCSNERPCKNCVKRNIAHGC). 2 disordered regions span residues 63-92 (GVPG…SPMD) and 250-270 (KQAS…NTLS). The segment covering 253–270 (SPSPSNTSTSENNTNTLS) has biased composition (low complexity).

Belongs to the ERT1/acuK family.

The protein resides in the nucleus. Functionally, transcription factor which regulates nonfermentable carbon utilization. The chain is Glucose starvation modulator protein 1 (GSM1) from Candida albicans (strain WO-1) (Yeast).